Consider the following 38-residue polypeptide: Photosystem I reaction center subunit IX (38 aa).

A helical membrane pass occupies residues 4–24; sequence FLTTAPVFSAIWFTLTAGIMI.

The protein belongs to the PsaJ family.

The protein resides in the plastid. It localises to the organellar chromatophore thylakoid membrane. Its function is as follows. May help in the organization of the PsaE and PsaF subunits. The protein is Photosystem I reaction center subunit IX of Paulinella chromatophora.